The following is a 204-amino-acid chain: Methylthioribulose-1-phosphate dehydratase (204 aa).

2 residues coordinate Zn(2+): histidine 94 and histidine 96.

It belongs to the aldolase class II family. MtnB subfamily. The cofactor is Zn(2+).

The catalysed reaction is 5-(methylsulfanyl)-D-ribulose 1-phosphate = 5-methylsulfanyl-2,3-dioxopentyl phosphate + H2O. It functions in the pathway amino-acid biosynthesis; L-methionine biosynthesis via salvage pathway; L-methionine from S-methyl-5-thio-alpha-D-ribose 1-phosphate: step 2/6. Functionally, catalyzes the dehydration of methylthioribulose-1-phosphate (MTRu-1-P) into 2,3-diketo-5-methylthiopentyl-1-phosphate (DK-MTP-1-P). The polypeptide is Methylthioribulose-1-phosphate dehydratase (Citrobacter koseri (strain ATCC BAA-895 / CDC 4225-83 / SGSC4696)).